Consider the following 2647-residue polypeptide: Filamin-A (2647 aa).

A compositionally biased stretch (low complexity) spans 1-15; it reads MSSSHSRAGQSAAGA. Positions 1-39 are disordered; the sequence is MSSSHSRAGQSAAGAAPGGGVDTRDAEMPATEKDLAEDA. Position 2 is an N-acetylserine (Ser2). Positions 2–274 are actin-binding; the sequence is SSSHSRAGQS…PKAKLKPGAP (273 aa). Ser11 carries the phosphoserine modification. A compositionally biased stretch (basic and acidic residues) spans 22–39; the sequence is DTRDAEMPATEKDLAEDA. Residues Lys42, Lys43, and Lys135 each participate in a glycyl lysine isopeptide (Lys-Gly) (interchain with G-Cter in ubiquitin) cross-link. Calponin-homology (CH) domains lie at 43-149 and 166-269; these read KIQQ…LHYS and QTPK…KAKL. The interval 271-294 is disordered; it reads PGAPLRPKLNPKKARAYGPGIEPT. Filamin repeat units follow at residues 276–374, 376–474, 475–570, 571–663, 667–763, 764–866, 867–965, 966–1061, 1062–1154, 1155–1249, 1250–1349, 1350–1442, 1443–1539, 1540–1636, and 1649–1740; these read RPKL…EVYV, KSQG…TVTV, GQAC…EVKV, GTEC…MADI, PQDF…RVNV, GAGS…RVKV, EPSH…SVAV, SPSL…PLEA, VAPT…KAHV, VPCF…KLQV, EPAV…QVPV, TEGC…KVPV, HDVT…KVKV, LPTH…RVRA, and VSIG…QVTA. Lys299 participates in a covalent cross-link: Glycyl lysine isopeptide (Lys-Gly) (interchain with G-Cter in SUMO1); alternate. A Glycyl lysine isopeptide (Lys-Gly) (interchain with G-Cter in SUMO2); alternate cross-link involves residue Lys299. N6-acetyllysine is present on residues Lys376 and Lys508. 5 positions are modified to N6-acetyllysine: Lys700, Lys781, Lys837, Lys865, and Lys906. Phosphoserine is present on residues Ser968 and Ser1055. Lys1071 carries the N6-acetyllysine; alternate modification. Lys1071 bears the N6-succinyllysine; alternate mark. Phosphoserine occurs at positions 1081 and 1084. A Phosphothreonine modification is found at Thr1089. Phosphoserine is present on residues Ser1301 and Ser1338. A disordered region spans residues 1361–1382; it reads HGPGIQSGTTNKPNKFTVETRG. Lys1372 bears the N6-acetyllysine mark. A phosphoserine mark is found at Ser1459 and Ser1533. Residues 1490 to 1607 form an interaction with furin region; sequence PKGLVEPVDV…DNHDGTYTVA (118 aa). An N6-acetyllysine modification is found at Lys1538. A phosphoserine mark is found at Ser1630 and Ser1734. Residues 1741–1778 are hinge 1; it reads LAGDQPSVQPPLRSQQLAPQYTYAQGGQQTWAPERPLV. Filamin repeat units follow at residues 1779–1860, 1861–1950, 1951–2039, 2042–2131, 2132–2230, 2233–2325, 2327–2420, and 2424–2516; these read GVNG…QFYV, DYVN…PFTA, RVTG…PVVI, SEIG…SPFS, VKVT…QFTV, LGEG…VVPV, SPSG…KIRV, and GHGG…KAKV. Ser1835 is modified (phosphoserine). Phosphoserine occurs at positions 1967, 2053, 2128, 2152, 2158, 2163, 2180, 2284, 2327, and 2329. Thr2336 carries the phosphothreonine modification. 6 positions are modified to phosphoserine: Ser2338, Ser2370, Ser2414, Ser2510, Ser2523, and Ser2526. Positions 2517–2551 are hinge 2; it reads TGPRLVSNHSLHETSSVFVDSLTKATCAPQHGAPG. The interval 2517–2647 is self-association site, tail; the sequence is TGPRLVSNHS…PGSPYRVVVP (131 aa). Residues 2552-2646 form a Filamin 24 repeat; sequence PGPADASKVV…IPGSPYRVVV (95 aa). Position 2569 is an N6-acetyllysine; alternate (Lys2569). Lys2569 carries the N6-succinyllysine; alternate modification. Lys2575 bears the N6-acetyllysine mark. Residue Thr2599 is modified to Phosphothreonine. N6-acetyllysine is present on residues Lys2607 and Lys2621.

This sequence belongs to the filamin family. Homodimer. Interacts with PDLIM2. Interacts with RFLNA and RFLNB. Interacts with FCGR1A, FLNB, FURIN, HSPB7, INPPL1, KCND2, MYOT, MYOZ1, ARHGAP24, PSEN1, PSEN2 and ECSCR. Also interacts with various other binding partners in addition to filamentous actin. Interacts (via N-terminus) with MIS18BP1 (via N-terminus). Interacts (via N-terminus) with TAF1B. Interacts with TMEM67 (via C-terminus) and MKS1. Interacts (via actin-binding domain) with MICALL2 (via CH domain). Interacts (via filamin repeat 5) with SYK; docks SYK to the plasma membrane. Interacts (via filamin repeats 19 and 21) with DRD3; increased PKA-mediated phosphorylation at Ser-2152. Interacts (via filamin repeat 21) with MAS1, AGTR1 and ADRA1D; increases PKA-mediated phosphorylation of FLNA at Ser-2152. Interacts (via filamin repeats 4, 9, 12, 17, 19, 21, and 23) with GP1BA (high affinity), ITGB7, ITGB2 and FBLIM1. Interacts with CEACAM1 (via cytoplasmic domain); inhibits cell migration and cell scattering by interfering with the interaction between FLNA and RALA. Interacts with FOXC1. Interacts (via calponin-homology (CH) domain 1 and filamin repeat 24) with CRMP1; the interaction alters FLNA ternary structure and thus promotes FLNA dissociation from F-actin. Interacts with DPYSL3/CRMP3 and DPYSL4/CRMP4. In terms of assembly, interacts with integrin ITGB1 isoform 1/beta-1A and isoform 5/beta-1D. Interacts with LUZP1; the interaction is not necessary for colocalization of LUZP1 with F-actin. Phosphorylation at Ser-2152 is negatively regulated by the autoinhibited conformation of filamin repeats 19-21. Ligand binding induces a conformational switch triggering phosphorylation at Ser-2152 by PKA. Post-translationally, phosphorylation extent changes in response to cell activation. In terms of processing, polyubiquitination in the CH1 domain by a SCF-like complex containing ASB2 leads to proteasomal degradation. Prior dissociation from actin may be required to expose the target lysines. Ubiquitinated in endothelial cells by RNF213 downstream of the non-canonical Wnt signaling pathway, leading to its degradation by the proteasome. In terms of tissue distribution, ubiquitous.

Its subcellular location is the cytoplasm. The protein localises to the cell cortex. It localises to the cytoskeleton. The protein resides in the perikaryon. It is found in the cell projection. Its subcellular location is the growth cone. The protein localises to the podosome. Promotes orthogonal branching of actin filaments and links actin filaments to membrane glycoproteins. Anchors various transmembrane proteins to the actin cytoskeleton and serves as a scaffold for a wide range of cytoplasmic signaling proteins. Interaction with FLNB may allow neuroblast migration from the ventricular zone into the cortical plate. Tethers cell surface-localized furin, modulates its rate of internalization and directs its intracellular trafficking. Involved in ciliogenesis. Plays a role in cell-cell contacts and adherens junctions during the development of blood vessels, heart and brain organs. Plays a role in platelets morphology through interaction with SYK that regulates ITAM- and ITAM-like-containing receptor signaling, resulting in by platelet cytoskeleton organization maintenance. During the axon guidance process, required for growth cone collapse induced by SEMA3A-mediated stimulation of neurons. The chain is Filamin-A (FLNA) from Homo sapiens (Human).